A 409-amino-acid chain; its full sequence is Phosphatidylserine decarboxylase proenzyme, mitochondrial (409 aa).

The N-terminal 52 residues, 1–52 (MATSVGHRCLGLLHGVAPWRSSLHPCEITALSQSLQPLRKLPFRAFRTDARK), are a transit peptide targeting the mitochondrion. Positions 36–103 (QPLRKLPFRA…LGLEIPPKLA (68 aa)) are necessary for localization to both lipid droplets and mitochondria. The Mitochondrial matrix portion of the chain corresponds to 53–63 (IHTAPARTMFL). The chain crosses the membrane as a helical span at residues 64 to 82 (LRPLPILLVTGGGYAGYRQ). The Mitochondrial intermembrane segment spans residues 83-409 (YEKYRERELE…IRFGEALGSL (327 aa)). Residues aspartate 191, histidine 267, and serine 378 each act as charge relay system; for autoendoproteolytic cleavage activity in the active site. Residue serine 378 is the Schiff-base intermediate with substrate; via pyruvic acid; for decarboxylase activity of the active site. The residue at position 378 (serine 378) is a Pyruvic acid (Ser); by autocatalysis.

This sequence belongs to the phosphatidylserine decarboxylase family. PSD-B subfamily. Eukaryotic type I sub-subfamily. As to quaternary structure, heterodimer of a large membrane-associated beta subunit and a small pyruvoyl-containing alpha subunit. It depends on pyruvate as a cofactor. Post-translationally, is synthesized initially as an inactive proenzyme. Formation of the active enzyme involves a self-maturation process in which the active site pyruvoyl group is generated from an internal serine residue via an autocatalytic post-translational modification. Two non-identical subunits are generated from the proenzyme in this reaction, and the pyruvate is formed at the N-terminus of the alpha chain, which is derived from the carboxyl end of the proenzyme. The autoendoproteolytic cleavage occurs by a canonical serine protease mechanism, in which the side chain hydroxyl group of the serine supplies its oxygen atom to form the C-terminus of the beta chain, while the remainder of the serine residue undergoes an oxidative deamination to produce ammonia and the pyruvoyl prosthetic group on the alpha chain. During this reaction, the Ser that is part of the protease active site of the proenzyme becomes the pyruvoyl prosthetic group, which constitutes an essential element of the active site of the mature decarboxylase.

It localises to the mitochondrion inner membrane. Its subcellular location is the cytoplasm. The protein localises to the lipid droplet. It catalyses the reaction a 1,2-diacyl-sn-glycero-3-phospho-L-serine + H(+) = a 1,2-diacyl-sn-glycero-3-phosphoethanolamine + CO2. It participates in phospholipid metabolism; phosphatidylethanolamine biosynthesis. Functionally, catalyzes the formation of phosphatidylethanolamine (PtdEtn) from phosphatidylserine (PtdSer). Plays a central role in phospholipid metabolism and in the interorganelle trafficking of phosphatidylserine. May be involved in lipid droplet biogenesis at the endoplasmic reticulum membrane. The sequence is that of Phosphatidylserine decarboxylase proenzyme, mitochondrial from Homo sapiens (Human).